Consider the following 115-residue polypeptide: NADH-ubiquinone oxidoreductase chain 3 (115 aa).

Transmembrane regions (helical) follow at residues 3-23, 55-75, and 84-104; these read LMLTLLTNTLLASLLVLIAFW, FFLVAITFLLFDLEIALLLPL, and LNTMLIMALILISLLAISLAY.

The protein belongs to the complex I subunit 3 family. As to quaternary structure, core subunit of respiratory chain NADH dehydrogenase (Complex I) which is composed of 45 different subunits. Interacts with TMEM186. Interacts with TMEM242.

It is found in the mitochondrion inner membrane. The enzyme catalyses a ubiquinone + NADH + 5 H(+)(in) = a ubiquinol + NAD(+) + 4 H(+)(out). In terms of biological role, core subunit of the mitochondrial membrane respiratory chain NADH dehydrogenase (Complex I) which catalyzes electron transfer from NADH through the respiratory chain, using ubiquinone as an electron acceptor. Essential for the catalytic activity of complex I. This chain is NADH-ubiquinone oxidoreductase chain 3, found in Equus asinus (Donkey).